An 85-amino-acid chain; its full sequence is Conotoxin Cap15b (85 aa).

The signal sequence occupies residues 1 to 23 (MEKLTFLILVATVLLTIHVLVQS). A propeptide spanning residues 24-49 (DGDKHLKRRPKQYATKRLSALMRGHR) is cleaved from the precursor. Pyrrolidone carboxylic acid is present on Gln-50.

This sequence belongs to the conotoxin O2 superfamily. Contains 4 disulfide bonds. As to expression, expressed by the venom duct.

Its subcellular location is the secreted. The chain is Conotoxin Cap15b from Conus capitaneus (Captain cone).